The primary structure comprises 345 residues: S-adenosylmethionine:tRNA ribosyltransferase-isomerase (345 aa).

This sequence belongs to the QueA family. In terms of assembly, monomer.

It is found in the cytoplasm. It catalyses the reaction 7-aminomethyl-7-carbaguanosine(34) in tRNA + S-adenosyl-L-methionine = epoxyqueuosine(34) in tRNA + adenine + L-methionine + 2 H(+). The protein operates within tRNA modification; tRNA-queuosine biosynthesis. Transfers and isomerizes the ribose moiety from AdoMet to the 7-aminomethyl group of 7-deazaguanine (preQ1-tRNA) to give epoxyqueuosine (oQ-tRNA). This is S-adenosylmethionine:tRNA ribosyltransferase-isomerase from Acidithiobacillus ferrooxidans (strain ATCC 53993 / BNL-5-31) (Leptospirillum ferrooxidans (ATCC 53993)).